Consider the following 152-residue polypeptide: Deoxyuridine 5'-triphosphate nucleotidohydrolase (152 aa).

Residues 71–73 (RSG), Asn-84, and 88–90 (TVD) contribute to the substrate site.

The protein belongs to the dUTPase family. Mg(2+) is required as a cofactor.

It catalyses the reaction dUTP + H2O = dUMP + diphosphate + H(+). It participates in pyrimidine metabolism; dUMP biosynthesis; dUMP from dCTP (dUTP route): step 2/2. This enzyme is involved in nucleotide metabolism: it produces dUMP, the immediate precursor of thymidine nucleotides and it decreases the intracellular concentration of dUTP so that uracil cannot be incorporated into DNA. The protein is Deoxyuridine 5'-triphosphate nucleotidohydrolase of Maricaulis maris (strain MCS10) (Caulobacter maris).